Consider the following 2108-residue polypeptide: Mucin-5B (2108 aa).

An N-terminal signal peptide occupies residues 1-21 (MEIKKERSFWIFCLIWSFCKG). The region spanning 36–203 (SECTTWGNFH…KVEDPSEKCP (168 aa)) is the VWFD 1 domain. 2 cysteine pairs are disulfide-bonded: C38/C166 and C60/C202. A disordered region spans residues 196-219 (EDPSEKCPDVRPDDHTGRHPTEDD). One can recognise a TIL 1 domain in the interval 304–360 (CPSNMEYMECGNSCADTCADPERSKICKAPCTDGCFCPPGTILDDLGGKKCVPRDSC). N381 carries N-linked (GlcNAc...) (complex) asparagine glycosylation. The VWFD 2 domain occupies 398 to 570 (GSCSIDGGFH…NSWKTRASCF (173 aa)). Cystine bridges form between C400–C534, C422–C569, and C443–C451. N-linked (GlcNAc...) (complex) asparagine glycans are attached at residues N528, N599, N680, and N772. The TIL 2 domain occupies 666–723 (CPETMVYNYSVKYCNQSCRSLDEPDPLCKVQIAPMEGCGCPEGTYLNDEEECVTPDDC). Residues 782–825 (GSECQKSCKTQDMHCYVTECVSGCMCPDGLVLDGSGGCIPKDQC) form the TIL 3 domain. A VWFC 1 domain is found at 825–897 (CPCVHGGHFY…DYILAQDFCP (73 aa)). Residue N855 is glycosylated (N-linked (GlcNAc...) (complex) asparagine). Positions 863-1033 (GTCTVYGNGH…NSWKITSTCS (171 aa)) constitute a VWFD 3 domain. Intrachain disulfides connect C865–C997, C887–C1032, C896–C994, and C914–C921. N-linked (GlcNAc...) (complex) asparagine glycans are attached at residues N1036, N1219, N1371, and N1452. Residues 1429 to 1613 (CICSGWGNEH…APVSTNRYCN (185 aa)) form the VWFD 4 domain. Cystine bridges form between C1431/C1573, C1453/C1612, and C1477/C1485. N1567, N1639, N1792, N1807, and N1841 each carry an N-linked (GlcNAc...) (complex) asparagine glycan. In terms of domain architecture, VWFC 2 spans 1761 to 1832 (CGCTAQDGSV…DPCCTETVCE (72 aa)). Residues 1870–1937 (GVCVSEGVEF…KEGQCCSQCQ (68 aa)) form the VWFC 3 domain. An N-linked (GlcNAc...) (complex) asparagine glycan is attached at N1964. 4 cysteine pairs are disulfide-bonded: C2010-C2066, C2031-C2080, C2042-C2096, and C2046-C2098. Residues 2010-2104 (CIDLPHKCKR…ECGCVETKCP (95 aa)) enclose the CTCK domain.

In terms of assembly, homomultimer; disulfide-linked. The N- and C-terminus mediate their assembly into higher order structures to form filaments. The CTCK domains of two polypeptides associate in the endoplasmic reticulum to generate intermolecularly disulfide-bonded dimers. These dimers progress to the Golgi apparatus, which is a more acidic environment than the endoplasmic reticulum. Under acidic conditions, the N-termini form non-covalent intermolecular interactions that juxtapose assemblies from different CTCK-linked dimers to produce long, disulfide-linked polymers that remain highly compact until secretion. In terms of processing, N-glycosylated. Complex glycosylation with bisecting N-acetylglucosamine. Contains mainly N-acetylglucosamine (3.1-8.5%), mannose (2.9-4.6%), a small amount of galactose (1.1-4.35) and sialic acid (0.3-1.3%). Most abundant glycan is composed of a GlcNAc(2)Man(3) core, a bisecting GlcNAc and another 3 GlcNAc antannae located on the mannoses of the core. Site Asn-1639 exists both in glycosylated and non-glycosylated forms.

Its subcellular location is the secreted. Ovomucin, the glycoprotein responsible for the gel properties of egg white, is composed for 2 subunits, alpha-ovomucin/MUC5B and beta-ovomucin/MUC6. The protein is Mucin-5B (MUC5B) of Gallus gallus (Chicken).